A 203-amino-acid chain; its full sequence is VEL1-related protein SPBPB2B2.15 (203 aa).

Residues 1-16 (MFKNLIFLFFIGLATA) form the signal peptide.

Belongs to the VEL1 family.

It localises to the cytoplasm. Its subcellular location is the cytosol. This is VEL1-related protein SPBPB2B2.15 from Schizosaccharomyces pombe (strain 972 / ATCC 24843) (Fission yeast).